The following is a 318-amino-acid chain: Phosphoenolpyruvate transferase (318 aa).

7,8-didemethyl-8-hydroxy-5-deazariboflavin is bound at residue Asp-50.

It belongs to the CofD family. In terms of assembly, homodimer. It depends on Mg(2+) as a cofactor.

It carries out the reaction enolpyruvoyl-2-diphospho-5'-guanosine + 7,8-didemethyl-8-hydroxy-5-deazariboflavin = dehydro coenzyme F420-0 + GMP + H(+). The protein operates within cofactor biosynthesis; coenzyme F420 biosynthesis. Catalyzes the transfer of the phosphoenolpyruvate moiety from enoylpyruvoyl-2-diphospho-5'-guanosine (EPPG) to 7,8-didemethyl-8-hydroxy-5-deazariboflavin (FO) with the formation of dehydro coenzyme F420-0 and GMP. The polypeptide is Phosphoenolpyruvate transferase (Streptomyces griseus subsp. griseus (strain JCM 4626 / CBS 651.72 / NBRC 13350 / KCC S-0626 / ISP 5235)).